The chain runs to 65 residues: MPKMKTKKSAAKRFKVRAGGSIKRSQAFKRHILTKKTTKNKRQLRGVAAVHASDMVSVRVMLPYA.

Belongs to the bacterial ribosomal protein bL35 family.

This Nitrosomonas europaea (strain ATCC 19718 / CIP 103999 / KCTC 2705 / NBRC 14298) protein is Large ribosomal subunit protein bL35.